The following is a 528-amino-acid chain: Probable rhamnogalacturonate lyase A (528 aa).

A signal peptide spans 1–20 (MLSKATLLLFLPSWARVTYA). Asparagine 46 carries an N-linked (GlcNAc...) asparagine glycan. Cysteines 50 and 93 form a disulfide. N-linked (GlcNAc...) asparagine glycosylation occurs at asparagine 148. A disulfide bridge links cysteine 184 with cysteine 193. A glycan (N-linked (GlcNAc...) asparagine) is linked at asparagine 351.

This sequence belongs to the polysaccharide lyase 4 family.

Its subcellular location is the secreted. The catalysed reaction is Endotype eliminative cleavage of L-alpha-rhamnopyranosyl-(1-&gt;4)-alpha-D-galactopyranosyluronic acid bonds of rhamnogalacturonan I domains in ramified hairy regions of pectin leaving L-rhamnopyranose at the reducing end and 4-deoxy-4,5-unsaturated D-galactopyranosyluronic acid at the non-reducing end.. Functionally, pectinolytic enzymes consist of four classes of enzymes: pectin lyase, polygalacturonase, pectin methylesterase and rhamnogalacturonase. Degrades the rhamnogalacturonan I (RG-I) backbone of pectin. The chain is Probable rhamnogalacturonate lyase A (rglA) from Aspergillus fumigatus (strain CBS 144.89 / FGSC A1163 / CEA10) (Neosartorya fumigata).